The primary structure comprises 352 residues: MSDRTEQVATSDIPRPTQNLRTRVVSYFPGLAVAVLIAISAQFLSEHYGAPATLMALLLGMSLNFLSESGARTVPGIHFASRAVLRFGVALLGARVSLEVLSDLGVSLLCLVTTALACTILFAIIVGKFAGMDWRLSLLTGGAVAICGASAAVALNAVLPPRQNSDRDLALTIVAITLLSTSAMVLYPVLASHLQFDAKESGVFIGGTIHDVAQVVGAGFAMSEETGQIATLVKIVRVSLLAPTIIAVLIMVTVLGAGAGQKPQKLGQVIPGFVLGFAFLAALKSMGFLPAAAGDVANDLSRWLLLIALGAVGLKTSVKEFASIRPSHVTLALLATAFLAAFIVVGLLWYRG.

10 helical membrane passes run 24–43 (VVSYFPGLAVAVLIAISAQF), 48–67 (YGAPATLMALLLGMSLNFLS), 104–126 (LGVSLLCLVTTALACTILFAIIV), 136–158 (LSLLTGGAVAICGASAAVALNAV), 169–191 (LALTIVAITLLSTSAMVLYPVLA), 201–223 (SGVFIGGTIHDVAQVVGAGFAMS), 235–257 (IVRVSLLAPTIIAVLIMVTVLGA), 272–294 (GFVLGFAFLAALKSMGFLPAAAG), 301–318 (SRWLLLIALGAVGLKTSV), and 328–350 (HVTLALLATAFLAAFIVVGLLWY).

It belongs to the UPF0324 family.

The protein localises to the cell membrane. The sequence is that of UPF0324 membrane protein RA0957 from Rhizobium meliloti (strain 1021) (Ensifer meliloti).